Reading from the N-terminus, the 121-residue chain is Conopressin-conophysin (121 aa).

Residues 1–20 (MGRLTMALCWLLLLLLTTQA) form the signal peptide. A disulfide bond links Cys21 and Cys26. Position 27 is a 4-hydroxyproline; partial; in Conopressin-ba1c (Pro27). Residue Gly29 is modified to Glycine amide. Disulfide bonds link Cys43-Cys83, Cys46-Cys57, Cys51-Cys73, Cys58-Cys63, Cys90-Cys108, Cys102-Cys120, and Cys109-Cys114.

This sequence belongs to the vasopressin/oxytocin family. As to expression, expressed by the venom duct.

It localises to the secreted. The polypeptide is Conopressin-conophysin (Conus bayani (Bayan's cone)).